A 743-amino-acid polypeptide reads, in one-letter code: Catalase-peroxidase (743 aa).

The span at 1 to 15 (MSSDSRPPQPDTSTQ) shows a compositional bias: polar residues. The segment at 1-40 (MSSDSRPPQPDTSTQSNSESESPAISSPTPQDHAPMTNRD) is disordered. Residues 16-28 (SNSESESPAISSP) show a composition bias toward low complexity. A cross-link (tryptophyl-tyrosyl-methioninium (Trp-Tyr) (with M-259)) is located at residues 110–233 (WHAAGTYRIQ…YGATTMGLIY (124 aa)). His111 functions as the Proton acceptor in the catalytic mechanism. The segment at residues 233 to 259 (YVNPEGPEGKPDPVAAAHDIRETFARM) is a cross-link (tryptophyl-tyrosyl-methioninium (Tyr-Met) (with W-110)). His274 contacts heme b. The interval 490 to 511 (DKRGGANGGRLRLEPQKSWESN) is disordered.

The protein belongs to the peroxidase family. Peroxidase/catalase subfamily. In terms of assembly, homodimer or homotetramer. Heme b serves as cofactor. Post-translationally, formation of the three residue Trp-Tyr-Met cross-link is important for the catalase, but not the peroxidase activity of the enzyme.

It catalyses the reaction H2O2 + AH2 = A + 2 H2O. It carries out the reaction 2 H2O2 = O2 + 2 H2O. Its function is as follows. Bifunctional enzyme with both catalase and broad-spectrum peroxidase activity. The sequence is that of Catalase-peroxidase from Mycobacterium marinum (strain ATCC BAA-535 / M).